The primary structure comprises 249 residues: Diaminopimelate epimerase (249 aa).

Substrate-binding residues include Asn11 and Asn60. Cys69 serves as the catalytic Proton donor. Residues 70–71 (GN), Asn164, and 182–183 (ER) each bind substrate. Catalysis depends on Cys192, which acts as the Proton acceptor. Residue 193–194 (GT) coordinates substrate.

This sequence belongs to the diaminopimelate epimerase family. Homodimer.

Its subcellular location is the cytoplasm. It catalyses the reaction (2S,6S)-2,6-diaminopimelate = meso-2,6-diaminopimelate. The protein operates within amino-acid biosynthesis; L-lysine biosynthesis via DAP pathway; DL-2,6-diaminopimelate from LL-2,6-diaminopimelate: step 1/1. Catalyzes the stereoinversion of LL-2,6-diaminopimelate (L,L-DAP) to meso-diaminopimelate (meso-DAP), a precursor of L-lysine and an essential component of the bacterial peptidoglycan. This chain is Diaminopimelate epimerase, found in Campylobacter lari (strain RM2100 / D67 / ATCC BAA-1060).